The sequence spans 207 residues: Gap junction epsilon-1 protein (207 aa).

Over 1 to 22 the chain is Cytoplasmic; the sequence is MSLNYIKNFYEGCLRPPTVIGQ. A helical transmembrane segment spans residues 23–43; the sequence is FHTLFFGSVRTFFLGVLGFAV. Topologically, residues 44 to 74 are extracellular; sequence YGNEALHFSCDPDKRELNLYCYNQFRPITPQ. 2 disulfide bridges follow: cysteine 53–cysteine 161 and cysteine 64–cysteine 147. Residues 75-95 traverse the membrane as a helical segment; the sequence is VFWALQLVTVLVPGAVFHLYA. Residues 96–111 lie on the Cytoplasmic side of the membrane; that stretch reads ACKNIDQEEILHRPMS. A helical transmembrane segment spans residues 112–132; that stretch reads TVFYIISVLLRIILEVLAFWL. Residues 133 to 175 are Extracellular-facing; it reads QSHLFGFLVDPIFMCDVTGLGKILNVSKCMVPEHFEKTIFLSA. A helical transmembrane segment spans residues 176 to 196; it reads MYTFTIITILLCIAEIFEILF. At 197–207 the chain is on the cytoplasmic side; it reads RRLGYLNQPMT.

This sequence belongs to the connexin family. Beta-type (group I) subfamily. In terms of assembly, a connexon is composed of a hexamer of connexins.

The protein resides in the cell membrane. Functionally, has significant hemichannel activity. However, has only low-efficiency gap junction activity and probably does not function as a gap junction channel in vivo. The sequence is that of Gap junction epsilon-1 protein from Danio rerio (Zebrafish).